Here is a 325-residue protein sequence, read N- to C-terminus: Beta-lactamase 1 (325 aa).

Residues methionine 1 to glycine 26 form the signal peptide. The disordered stretch occupies residues glycine 30–alanine 50. Serine 93 (acyl-ester intermediate) is an active-site residue. Substrate is bound at residue lysine 270 to glycine 272.

It belongs to the class-A beta-lactamase family.

It carries out the reaction a beta-lactam + H2O = a substituted beta-amino acid. This Streptomyces cacaoi protein is Beta-lactamase 1 (blaL).